We begin with the raw amino-acid sequence, 101 residues long: Small ribosomal subunit protein uS14 (101 aa).

It belongs to the universal ribosomal protein uS14 family. As to quaternary structure, part of the 30S ribosomal subunit. Contacts proteins S3 and S10.

Functionally, binds 16S rRNA, required for the assembly of 30S particles and may also be responsible for determining the conformation of the 16S rRNA at the A site. The sequence is that of Small ribosomal subunit protein uS14 from Pseudomonas aeruginosa (strain LESB58).